Here is a 66-residue protein sequence, read N- to C-terminus: Small ribosomal subunit protein bS21 (66 aa).

It belongs to the bacterial ribosomal protein bS21 family.

The protein is Small ribosomal subunit protein bS21 of Rickettsia felis (strain ATCC VR-1525 / URRWXCal2) (Rickettsia azadi).